A 468-amino-acid chain; its full sequence is Zinc finger protein 672 (468 aa).

4 C2H2-type zinc fingers span residues 15–37 (YSCS…ERAH), 43–65 (FCCL…RWTH), 71–93 (YICS…LGTH), and 100–123 (RPCR…ARQH). The segment at 129 to 151 (HRCPLCARSFRQSALPFHLARAH) adopts a C2H2-type 5; degenerate zinc-finger fold. C2H2-type zinc fingers lie at residues 167–189 (YHCT…SRIH), 202–224 (HLCG…LQRH), 230–252 (FKCP…QRTH), 258–280 (YACS…QRSH), 286–308 (HVCA…QRSH), 314–336 (FPCP…LRTH), 342–364 (YHCE…LRNH), 370–392 (HKCP…RKTH), and 398–420 (AECT…QRSH).

It belongs to the krueppel C2H2-type zinc-finger protein family.

It is found in the nucleus. May be involved in transcriptional regulation. The polypeptide is Zinc finger protein 672 (Znf672) (Mus musculus (Mouse)).